The chain runs to 453 residues: DNA repair protein RadA (453 aa).

Residues 10 to 27 (CQECGYQSPKYLGRCPNC) form a C4-type zinc finger. ATP is bound at residue 95–102 (GDPGIGKS). The RadA KNRFG motif motif lies at 251–255 (KNRFG). The lon-protease-like stretch occupies residues 350 to 453 (DAYLKSAGGV…VGQVLNAVFS (104 aa)).

It belongs to the RecA family. RadA subfamily.

In terms of biological role, DNA-dependent ATPase involved in processing of recombination intermediates, plays a role in repairing DNA breaks. Stimulates the branch migration of RecA-mediated strand transfer reactions, allowing the 3' invading strand to extend heteroduplex DNA faster. Binds ssDNA in the presence of ADP but not other nucleotides, has ATPase activity that is stimulated by ssDNA and various branched DNA structures, but inhibited by SSB. Does not have RecA's homology-searching function. This chain is DNA repair protein RadA, found in Streptococcus pyogenes serotype M1.